The sequence spans 82 residues: ATP synthase subunit c (82 aa).

2 consecutive transmembrane segments (helical) span residues 7–27 (AASVVAAGLAVGLAAIGPGIG) and 57–77 (LAFMESLTIYGLVVALVLLFA).

The protein belongs to the ATPase C chain family. F-type ATPases have 2 components, F(1) - the catalytic core - and F(0) - the membrane proton channel. F(1) has five subunits: alpha(3), beta(3), gamma(1), delta(1), epsilon(1). F(0) has four main subunits: a(1), b(1), b'(1) and c(10-14). The alpha and beta chains form an alternating ring which encloses part of the gamma chain. F(1) is attached to F(0) by a central stalk formed by the gamma and epsilon chains, while a peripheral stalk is formed by the delta, b and b' chains.

It is found in the cellular thylakoid membrane. In terms of biological role, f(1)F(0) ATP synthase produces ATP from ADP in the presence of a proton or sodium gradient. F-type ATPases consist of two structural domains, F(1) containing the extramembraneous catalytic core and F(0) containing the membrane proton channel, linked together by a central stalk and a peripheral stalk. During catalysis, ATP synthesis in the catalytic domain of F(1) is coupled via a rotary mechanism of the central stalk subunits to proton translocation. Key component of the F(0) channel; it plays a direct role in translocation across the membrane. A homomeric c-ring of between 10-14 subunits forms the central stalk rotor element with the F(1) delta and epsilon subunits. This Synechococcus sp. (strain RCC307) protein is ATP synthase subunit c.